We begin with the raw amino-acid sequence, 276 residues long: MGIKKYNPTTNGRRNMTTNDFAEITTDRPEKSLLAPLSKKAGRNNQGKITVRHQGGGHKRQYRIIDFKRNKDGIPGRVATIEYDPNRSANIALINYVDGEKRYILAPKNLEVGMEIMSGAEADIKIGNALPLINIPVGTVVHNIELKPGRGGQLVRSAGTSAQVLGKEGKYVLVRLTSGEVRLVLSACRATVGQVGNESHELIKIGKAGRSRWLGKRPTVRGSVMNPVDHPHGGGEGRSPIGRKSPMSPWGKPTLGFKTRKKNKASDKFIVRRRKK.

Disordered stretches follow at residues Met1–Asp20 and Thr219–Lys276. The segment covering Asn7–Asp20 has biased composition (polar residues).

The protein belongs to the universal ribosomal protein uL2 family. As to quaternary structure, part of the 50S ribosomal subunit. Forms a bridge to the 30S subunit in the 70S ribosome.

Its function is as follows. One of the primary rRNA binding proteins. Required for association of the 30S and 50S subunits to form the 70S ribosome, for tRNA binding and peptide bond formation. It has been suggested to have peptidyltransferase activity; this is somewhat controversial. Makes several contacts with the 16S rRNA in the 70S ribosome. The protein is Large ribosomal subunit protein uL2 of Bacillus anthracis (strain A0248).